The primary structure comprises 72 residues: Translation initiation factor IF-1 (72 aa).

The region spanning 1 to 72 (MAKEDVIEMQ…SKGRIVFRAR (72 aa)) is the S1-like domain.

Belongs to the IF-1 family. Component of the 30S ribosomal translation pre-initiation complex which assembles on the 30S ribosome in the order IF-2 and IF-3, IF-1 and N-formylmethionyl-tRNA(fMet); mRNA recruitment can occur at any time during PIC assembly.

Its subcellular location is the cytoplasm. Its function is as follows. One of the essential components for the initiation of protein synthesis. Stabilizes the binding of IF-2 and IF-3 on the 30S subunit to which N-formylmethionyl-tRNA(fMet) subsequently binds. Helps modulate mRNA selection, yielding the 30S pre-initiation complex (PIC). Upon addition of the 50S ribosomal subunit IF-1, IF-2 and IF-3 are released leaving the mature 70S translation initiation complex. This is Translation initiation factor IF-1 from Vibrio cholerae serotype O1 (strain ATCC 39541 / Classical Ogawa 395 / O395).